The chain runs to 312 residues: Retinol dehydrogenase 8 (312 aa).

9–18 contacts NADP(+); it reads LISGCSSGIG. 3 helical membrane-spanning segments follow: residues 87 to 107, 138 to 158, and 170 to 190; these read VLVN…SLAA, IVVV…VYAA, and LAVQ…GPVV. A substrate-binding site is contributed by Ser-143. Tyr-156 serves as the catalytic Proton acceptor.

This sequence belongs to the short-chain dehydrogenases/reductases (SDR) family. In terms of tissue distribution, detected in photoreceptor outer segments in the retina (at protein level).

Its subcellular location is the membrane. The catalysed reaction is all-trans-retinol + NADP(+) = all-trans-retinal + NADPH + H(+). In terms of biological role, retinol dehydrogenase with a clear preference for NADP. Converts all-trans-retinal to all-trans-retinol. May play a role in the regeneration of visual pigment at high light intensity. The sequence is that of Retinol dehydrogenase 8 (RDH8) from Bos taurus (Bovine).